Here is a 1128-residue protein sequence, read N- to C-terminus: Major DNA-binding protein (1128 aa).

A zinc finger spans residues 453–466 (CELCQGTCPASCIH). The required for nuclear localization stretch occupies residues 1098 to 1128 (QIEEFAPQATLSTLAASRKRKITSILSDIDL).

Belongs to the herpesviridae major DNA-binding protein family. As to quaternary structure, homooligomers. Forms double-helical filaments necessary for the formation of replication compartments within the host nucleus. Interacts with the origin-binding protein. Interacts with the helicase primase complex; this interaction stimulates primer synthesis activity of the helicase-primase complex. Interacts with the DNA polymerase. Interacts with the alkaline exonuclease; this interaction increases its nuclease processivity.

It is found in the host nucleus. Single-stranded DNA-binding protein required for DNA replication. Functionally, plays several crucial roles in viral infection. Participates in the opening of the viral DNA origin to initiate replication by interacting with the origin-binding protein. May disrupt loops, hairpins and other secondary structures present on ssDNA to reduce and eliminate pausing of viral DNA polymerase at specific sites during elongation. Promotes viral DNA recombination by performing strand-transfer, characterized by the ability to transfer a DNA strand from a linear duplex to a complementary single-stranded DNA circle. Can also catalyze the renaturation of complementary single strands. Additionally, reorganizes the host cell nucleus, leading to the formation of prereplicative sites and replication compartments. This process is driven by the protein which can form double-helical filaments in the absence of DNA. This Saimiri sciureus (Common squirrel monkey) protein is Major DNA-binding protein.